A 939-amino-acid polypeptide reads, in one-letter code: Isoleucine--tRNA ligase (939 aa).

The 'HIGH' region signature appears at 58-68 (PYANGNIHIGH). Glu-562 contacts L-isoleucyl-5'-AMP. Residues 603 to 607 (KMSKS) carry the 'KMSKS' region motif. An ATP-binding site is contributed by Lys-606. Cys-903, Cys-906, Cys-922, and Cys-925 together coordinate Zn(2+).

This sequence belongs to the class-I aminoacyl-tRNA synthetase family. IleS type 1 subfamily. In terms of assembly, monomer. Zn(2+) is required as a cofactor.

The protein localises to the cytoplasm. It carries out the reaction tRNA(Ile) + L-isoleucine + ATP = L-isoleucyl-tRNA(Ile) + AMP + diphosphate. In terms of biological role, catalyzes the attachment of isoleucine to tRNA(Ile). As IleRS can inadvertently accommodate and process structurally similar amino acids such as valine, to avoid such errors it has two additional distinct tRNA(Ile)-dependent editing activities. One activity is designated as 'pretransfer' editing and involves the hydrolysis of activated Val-AMP. The other activity is designated 'posttransfer' editing and involves deacylation of mischarged Val-tRNA(Ile). This Buchnera aphidicola subsp. Baizongia pistaciae (strain Bp) protein is Isoleucine--tRNA ligase.